We begin with the raw amino-acid sequence, 214 residues long: MNDKISFLPPEPIQLLDEDSTEPELDIDSQQENEGPISASNSNDSTSHSNDCGATITRTRPRRSSSINANFSFQKAHVSDCTIVNGDHGTKFAVWRITVFLEPNLKAFAAKRESYKIQTYKRYSDFVRLRENLLTRIKTAKPEKLNCLQIPHLPPSVQWYSSWKYQEVNLNKDWLAKRQRGLEYFLNHIILNSSLVEMTKDILIQFLEPSKRVA.

A disordered region spans residues 1–63 (MNDKISFLPP…ATITRTRPRR (63 aa)). The PxP motif lies at 5–15 (ISFLPPEPIQL). Residues 16–31 (LDEDSTEPELDIDSQQ) are compositionally biased toward acidic residues. The span at 38–58 (SASNSNDSTSHSNDCGATITR) shows a compositional bias: low complexity. Phosphoserine occurs at positions 65 and 66. The region spanning 73-213 (FQKAHVSDCT…IQFLEPSKRV (141 aa)) is the PX domain.

This sequence belongs to the YPT35 family. Interacts with RBD2, YIF1, YIP1 and YIP4.

The protein localises to the endosome membrane. Its subcellular location is the vacuole membrane. Its function is as follows. Recruits the lipid transfer protein VPS13 to endosomal and vacuolar membranes. The protein is Endosomal/vacuolar adapter protein YPT35 (YPT35) of Saccharomyces cerevisiae (strain YJM789) (Baker's yeast).